The primary structure comprises 207 residues: Casparian strip membrane protein 1 (207 aa).

Residues Met1–Glu12 show a composition bias toward polar residues. A disordered region spans residues Met1 to Leu24. Residues Met1–Gly48 are Cytoplasmic-facing. A helical membrane pass occupies residues Leu49–Ile69. Over Ala70–Thr98 the chain is Extracellular. The chain crosses the membrane as a helical span at residues Phe99–Ile119. Residues Val120–Asp138 are Cytoplasmic-facing. The helical transmembrane segment at Thr139–Ala159 threads the bilayer. Residues His160 to Gly184 lie on the Extracellular side of the membrane. The helical transmembrane segment at Ala185–Phe205 threads the bilayer. Topologically, residues Ser206–Leu207 are cytoplasmic.

Belongs to the Casparian strip membrane proteins (CASP) family. Homodimer and heterodimers.

It localises to the cell membrane. Functionally, regulates membrane-cell wall junctions and localized cell wall deposition. Required for establishment of the Casparian strip membrane domain (CSD) and the subsequent formation of Casparian strips, a cell wall modification of the root endodermis that determines an apoplastic barrier between the intraorganismal apoplasm and the extraorganismal apoplasm and prevents lateral diffusion. The polypeptide is Casparian strip membrane protein 1 (Taraxacum kok-saghyz (Russian dandelion)).